Here is a 207-residue protein sequence, read N- to C-terminus: Uridine kinase (207 aa).

13 to 20 is a binding site for ATP; that stretch reads GASGSGKT.

This sequence belongs to the uridine kinase family.

It localises to the cytoplasm. It carries out the reaction uridine + ATP = UMP + ADP + H(+). The catalysed reaction is cytidine + ATP = CMP + ADP + H(+). It functions in the pathway pyrimidine metabolism; CTP biosynthesis via salvage pathway; CTP from cytidine: step 1/3. Its pathway is pyrimidine metabolism; UMP biosynthesis via salvage pathway; UMP from uridine: step 1/1. The chain is Uridine kinase from Ureaplasma parvum serovar 3 (strain ATCC 27815 / 27 / NCTC 11736).